The following is a 146-amino-acid chain: D-aminoacyl-tRNA deacylase (146 aa).

The short motif at Gly137 to Pro138 is the Gly-cisPro motif, important for rejection of L-amino acids element.

Belongs to the DTD family. Homodimer.

It localises to the cytoplasm. It carries out the reaction glycyl-tRNA(Ala) + H2O = tRNA(Ala) + glycine + H(+). It catalyses the reaction a D-aminoacyl-tRNA + H2O = a tRNA + a D-alpha-amino acid + H(+). In terms of biological role, an aminoacyl-tRNA editing enzyme that deacylates mischarged D-aminoacyl-tRNAs. Also deacylates mischarged glycyl-tRNA(Ala), protecting cells against glycine mischarging by AlaRS. Acts via tRNA-based rather than protein-based catalysis; rejects L-amino acids rather than detecting D-amino acids in the active site. By recycling D-aminoacyl-tRNA to D-amino acids and free tRNA molecules, this enzyme counteracts the toxicity associated with the formation of D-aminoacyl-tRNA entities in vivo and helps enforce protein L-homochirality. This is D-aminoacyl-tRNA deacylase from Shouchella clausii (strain KSM-K16) (Alkalihalobacillus clausii).